A 159-amino-acid polypeptide reads, in one-letter code: Transcriptional repressor NrdR (159 aa).

The segment at 1–26 (MRCPFCAHDNSQVKDSRPSEDNTSIR) is disordered. A zinc finger spans residues 3–34 (CPFCAHDNSQVKDSRPSEDNTSIRRRRQCEGC). Over residues 11-24 (SQVKDSRPSEDNTS) the composition is skewed to basic and acidic residues. In terms of domain architecture, ATP-cone spans 49-139 (VVVVKSGERR…VYRDFTEARD (91 aa)).

Belongs to the NrdR family. It depends on Zn(2+) as a cofactor.

In terms of biological role, negatively regulates transcription of bacterial ribonucleotide reductase nrd genes and operons by binding to NrdR-boxes. This Novosphingobium aromaticivorans (strain ATCC 700278 / DSM 12444 / CCUG 56034 / CIP 105152 / NBRC 16084 / F199) protein is Transcriptional repressor NrdR.